A 129-amino-acid chain; its full sequence is Sulfurtransferase TusD (129 aa).

The active-site Cysteine persulfide intermediate is Cys-79.

The protein belongs to the DsrE/TusD family. In terms of assembly, heterohexamer, formed by a dimer of trimers. The hexameric TusBCD complex contains 2 copies each of TusB, TusC and TusD. The TusBCD complex interacts with TusE.

The protein localises to the cytoplasm. Its function is as follows. Part of a sulfur-relay system required for 2-thiolation of 5-methylaminomethyl-2-thiouridine (mnm(5)s(2)U) at tRNA wobble positions. Accepts sulfur from TusA and transfers it in turn to TusE. The sequence is that of Sulfurtransferase TusD from Serratia proteamaculans (strain 568).